We begin with the raw amino-acid sequence, 98 residues long: Integration host factor subunit alpha (98 aa).

Belongs to the bacterial histone-like protein family. As to quaternary structure, heterodimer of an alpha and a beta chain.

In terms of biological role, this protein is one of the two subunits of integration host factor, a specific DNA-binding protein that functions in genetic recombination as well as in transcriptional and translational control. This chain is Integration host factor subunit alpha, found in Mannheimia succiniciproducens (strain KCTC 0769BP / MBEL55E).